The chain runs to 291 residues: MLQGSLVALITPMNQDGSIHYEQLRDLIDWHIENGTDGIVAVGTTGESATLSVEEHTAVIEAVVKHVAKRVPVIAGTGANNTVEAIALSQAAEKAGADYTLSVVPYYNKPSQEGMYRHFKAVAEAAAIPMILYNVPGRTVVSMTNDTILRLSEIPNIVGVKEASGNVGSNIELINRAPEGFVVLSGDDHTALPFMLCGGHGVITVAANAAPKLFADMCRAALQGDIALARELNDRLIPIYDTMFCEPSPAAPKWAVSALGRCEPHVRLPLVPLTEGGQAKVRAALKASGQL.

Thr-45 is a binding site for pyruvate. The active-site Proton donor/acceptor is the Tyr-133. The active-site Schiff-base intermediate with substrate is the Lys-161. Ile-203 lines the pyruvate pocket.

This sequence belongs to the DapA family. Homotetramer; dimer of dimers.

Its subcellular location is the cytoplasm. It catalyses the reaction L-aspartate 4-semialdehyde + pyruvate = (2S,4S)-4-hydroxy-2,3,4,5-tetrahydrodipicolinate + H2O + H(+). Its pathway is amino-acid biosynthesis; L-lysine biosynthesis via DAP pathway; (S)-tetrahydrodipicolinate from L-aspartate: step 3/4. In terms of biological role, catalyzes the condensation of (S)-aspartate-beta-semialdehyde [(S)-ASA] and pyruvate to 4-hydroxy-tetrahydrodipicolinate (HTPA). The sequence is that of 4-hydroxy-tetrahydrodipicolinate synthase from Neisseria meningitidis serogroup C / serotype 2a (strain ATCC 700532 / DSM 15464 / FAM18).